The following is a 284-amino-acid chain: Homeobox protein SMOX-5 (284 aa).

Residues 37 to 96 (RRKTRTTFSNCQLNELENNFNRQRYLTPTDRDRIAKHLGLTNTQVITWFQNRRAKLKREA) constitute a DNA-binding region (homeobox). Positions 117–172 (LSLSDHDHEETQIDDENEQGDNNNDDDGDDNDVEEDDGEEQEKNHTKYLTQPPSIS) are disordered. Residues 128–156 (QIDDENEQGDNNNDDDGDDNDVEEDDGEE) show a composition bias toward acidic residues.

The protein resides in the nucleus. In Schistosoma mansoni (Blood fluke), this protein is Homeobox protein SMOX-5 (SMOX-5).